A 689-amino-acid polypeptide reads, in one-letter code: Glycine--tRNA ligase beta subunit (689 aa).

This sequence belongs to the class-II aminoacyl-tRNA synthetase family. In terms of assembly, tetramer of two alpha and two beta subunits.

It localises to the cytoplasm. The enzyme catalyses tRNA(Gly) + glycine + ATP = glycyl-tRNA(Gly) + AMP + diphosphate. This chain is Glycine--tRNA ligase beta subunit, found in Salmonella schwarzengrund (strain CVM19633).